The following is a 723-amino-acid chain: Cyclin-T2 (723 aa).

Positions 1–298 (MASGRGASSR…SVTGVPANPS (298 aa)) are interaction with MDFIC and MDFI. The region spanning 12–147 (FFTREQLENT…IMLQTLGFEI (136 aa)) is the Cyclin N-terminal domain. The interval 250–298 (RLKRIRNWRAMAKKPKVDGQVSETPLLGSSLVQNSILVDSVTGVPANPS) is interaction with POLR2A. 2 stretches are compositionally biased toward polar residues: residues 297 to 307 (PSFQKPSTSTF) and 314 to 325 (NSGSTSVQDSRA). 4 disordered regions span residues 297–325 (PSFQ…DSRA), 340–364 (SYSL…VYTQ), 385–428 (ALHS…GMLP), and 458–645 (AEQQ…SSVK). Over residues 395–409 (DKVADHSSAKQEYTH) the composition is skewed to basic and acidic residues. Lysine 404 is covalently cross-linked (Glycyl lysine isopeptide (Lys-Gly) (interchain with G-Cter in SUMO2)). Serine 477 carries the phosphoserine modification. 3 stretches are compositionally biased toward basic and acidic residues: residues 489–503 (DRPE…ERSG), 517–543 (GPSK…EGSG), and 552–565 (ISRD…EHPA). A compositionally biased stretch (basic residues) spans 566–576 (NRHHSSHKYLH). Serine 596 is modified (phosphoserine). The span at 631–645 (SSKSAGSSSSSSSVK) shows a compositional bias: low complexity.

Belongs to the cyclin family. Cyclin C subfamily. As to quaternary structure, interacts with CDK9 to form P-TEFb. Interacts with POLR2A (via the C-terminal domain (CTD)); mediates transcriptional activity. Interacts with HEXIM1; mediates formation of a tripartite complex with KPNA2. Interacts with HEXIM2. Interacts with PKN1; enhances MYOD1-dependent transcription. P-TEFB complex interacts with RB1; promotes phosphorylation of RB1. P-TEFB complex interacts with MYOD1; promotes the transcriptional activity of MYOD1 through its CDK9-mediated phosphorylation. Interacts with MDFI and MDFIC. In terms of tissue distribution, highly expressed in all phases of skeletal muscle differentiation, particularly in later stages. Highly expressed in skeletal muscle. Significantly expressed in heart, brain, kidney, liver, testis, and pancreas.

The protein resides in the cytoplasm. It is found in the perinuclear region. Its subcellular location is the nucleus. In terms of biological role, regulatory subunit of the cyclin-dependent kinase pair (CDK9/cyclin T) complex, also called positive transcription elongation factor B (P-TEFB), which is proposed to facilitate the transition from abortive to production elongation by phosphorylating the CTD (carboxy-terminal domain) of the large subunit of RNA polymerase II (RNAP II). The activity of this complex is regulated by binding with 7SK snRNA. Plays a role during muscle differentiation; P-TEFB complex interacts with MYOD1; this tripartite complex promotes the transcriptional activity of MYOD1 through its CDK9-mediated phosphorylation and binds the chromatin of promoters and enhancers of muscle-specific genes; this event correlates with hyperphosphorylation of the CTD domain of RNA pol II. In addition, enhances MYOD1-dependent transcription through interaction with PKN1. Involved in early embryo development. This Mus musculus (Mouse) protein is Cyclin-T2.